Reading from the N-terminus, the 143-residue chain is Envelope protein A28 homolog (143 aa).

A helical; Signal-anchor for type II membrane protein membrane pass occupies residues 1-21; that stretch reads MNTVQILVVILITTALSFLVF. Residues 22–143 are Virion surface-facing; the sequence is QLWYYAENYE…LLRLLMANTS (122 aa).

Belongs to the poxviridae A28 protein family. Contains two intramolecular disulfide bonds. They are created by the viral disulfide bond formation pathway, a poxvirus-specific pathway that operates on the cytoplasmic side of the MV membranes.

It is found in the virion membrane. In terms of biological role, envelope protein required for virus entry into host cell and for cell-cell fusion (syncytium formation). The sequence is that of Envelope protein A28 homolog from Amsacta (AmEPV).